Consider the following 546-residue polypeptide: Chaperonin GroEL (546 aa).

Residues 29–32 (TLGP), Lys-50, 86–90 (DGTTT), Gly-414, 477–479 (NAL), and Asp-493 each bind ATP.

The protein belongs to the chaperonin (HSP60) family. Forms a cylinder of 14 subunits composed of two heptameric rings stacked back-to-back. Interacts with the co-chaperonin GroES.

Its subcellular location is the cytoplasm. The catalysed reaction is ATP + H2O + a folded polypeptide = ADP + phosphate + an unfolded polypeptide.. Functionally, together with its co-chaperonin GroES, plays an essential role in assisting protein folding. The GroEL-GroES system forms a nano-cage that allows encapsulation of the non-native substrate proteins and provides a physical environment optimized to promote and accelerate protein folding. This Leptospira interrogans serogroup Icterohaemorrhagiae serovar Lai (strain 56601) protein is Chaperonin GroEL.